The sequence spans 82 residues: Conotoxin MiK42 (82 aa).

The first 22 residues, 1-22, serve as a signal peptide directing secretion; that stretch reads MKLTCALIVAMLLLTACQLITT. Residues 23–49 constitute a propeptide that is removed on maturation; the sequence is DDFRGRQQYRTARSRTKMQNYKIFRLT. Intrachain disulfides connect Cys52–Cys67, Cys59–Cys70, and Cys66–Cys80.

Belongs to the conotoxin O1 superfamily. In terms of tissue distribution, expressed by the venom duct.

It localises to the secreted. The protein is Conotoxin MiK42 of Conus miles (Soldier cone).